Here is a 375-residue protein sequence, read N- to C-terminus: Succinyl-diaminopimelate desuccinylase (375 aa).

Histidine 66 is a Zn(2+) binding site. Aspartate 68 is a catalytic residue. Aspartate 99 is a binding site for Zn(2+). The active-site Proton acceptor is the glutamate 133. Zn(2+)-binding residues include glutamate 134, glutamate 162, and histidine 348.

Belongs to the peptidase M20A family. DapE subfamily. Homodimer. It depends on Zn(2+) as a cofactor. The cofactor is Co(2+).

The enzyme catalyses N-succinyl-(2S,6S)-2,6-diaminopimelate + H2O = (2S,6S)-2,6-diaminopimelate + succinate. The protein operates within amino-acid biosynthesis; L-lysine biosynthesis via DAP pathway; LL-2,6-diaminopimelate from (S)-tetrahydrodipicolinate (succinylase route): step 3/3. Catalyzes the hydrolysis of N-succinyl-L,L-diaminopimelic acid (SDAP), forming succinate and LL-2,6-diaminopimelate (DAP), an intermediate involved in the bacterial biosynthesis of lysine and meso-diaminopimelic acid, an essential component of bacterial cell walls. The protein is Succinyl-diaminopimelate desuccinylase of Salmonella agona (strain SL483).